The following is a 66-amino-acid chain: ATP synthase F(0) complex subunit 8 (66 aa).

The chain crosses the membrane as a helical span at residues 8-24; it reads IWLLAVVIVLTTLMIFL. At Lys-54 the chain carries N6-acetyllysine; alternate. N6-succinyllysine; alternate is present on Lys-54. The residue at position 57 (Lys-57) is an N6-acetyllysine.

This sequence belongs to the ATPase protein 8 family. Component of the ATP synthase complex composed at least of ATP5F1A/subunit alpha, ATP5F1B/subunit beta, ATP5MC1/subunit c (homooctomer), MT-ATP6/subunit a, MT-ATP8/subunit 8, ATP5ME/subunit e, ATP5MF/subunit f, ATP5MG/subunit g, ATP5MK/subunit k, ATP5MJ/subunit j, ATP5F1C/subunit gamma, ATP5F1D/subunit delta, ATP5F1E/subunit epsilon, ATP5PF/subunit F6, ATP5PB/subunit b, ATP5PD/subunit d, ATP5PO/subunit OSCP. ATP synthase complex consists of a soluble F(1) head domain (subunits alpha(3) and beta(3)) - the catalytic core - and a membrane F(0) domain - the membrane proton channel (subunits c, a, 8, e, f, g, k and j). These two domains are linked by a central stalk (subunits gamma, delta, and epsilon) rotating inside the F1 region and a stationary peripheral stalk (subunits F6, b, d, and OSCP). Interacts with PRICKLE3.

The protein localises to the mitochondrion membrane. Its function is as follows. Subunit 8, of the mitochondrial membrane ATP synthase complex (F(1)F(0) ATP synthase or Complex V) that produces ATP from ADP in the presence of a proton gradient across the membrane which is generated by electron transport complexes of the respiratory chain. ATP synthase complex consist of a soluble F(1) head domain - the catalytic core - and a membrane F(1) domain - the membrane proton channel. These two domains are linked by a central stalk rotating inside the F(1) region and a stationary peripheral stalk. During catalysis, ATP synthesis in the catalytic domain of F(1) is coupled via a rotary mechanism of the central stalk subunits to proton translocation. In vivo, can only synthesize ATP although its ATP hydrolase activity can be activated artificially in vitro. Part of the complex F(0) domain. The polypeptide is ATP synthase F(0) complex subunit 8 (Loxodonta africana (African elephant)).